Here is a 633-residue protein sequence, read N- to C-terminus: Leucine-rich repeat and IQ domain-containing protein 3 (633 aa).

LRR repeat units follow at residues 51-72 (SLRVCIFSNNFVTDIQPLQGCK), 73-94 (KLIKLDLHGNQIKTLPDRTFWN), and 98-119 (NLKLLYLHDNGFAKLKNICVLS). Residues 132–179 (CPVSLKKGYRHVLVNSIWPLKALDHHVISDEEIIQNWHLPERFKTFSQ) enclose the LRRCT domain. Positions 215–244 (HNSPVLIIQRWIRGFIVRKHLSPYFTRKRH) constitute an IQ domain. Positions 322-343 (NSKQPRHHIQKGQNEMKSDSED) are disordered. Residues 556-616 (EKREKRKYKQ…AKVEFINTYY (61 aa)) adopt a coiled-coil conformation.

The sequence is that of Leucine-rich repeat and IQ domain-containing protein 3 (Lrriq3) from Rattus norvegicus (Rat).